Reading from the N-terminus, the 158-residue chain is Cyclic pyranopterin monophosphate synthase (158 aa).

Residues 75 to 77 (LCH) and 113 to 114 (ME) each bind substrate. The active site involves aspartate 128.

It belongs to the MoaC family. Homohexamer; trimer of dimers.

It catalyses the reaction (8S)-3',8-cyclo-7,8-dihydroguanosine 5'-triphosphate = cyclic pyranopterin phosphate + diphosphate. It functions in the pathway cofactor biosynthesis; molybdopterin biosynthesis. Functionally, catalyzes the conversion of (8S)-3',8-cyclo-7,8-dihydroguanosine 5'-triphosphate to cyclic pyranopterin monophosphate (cPMP). The sequence is that of Cyclic pyranopterin monophosphate synthase from Histophilus somni (strain 129Pt) (Haemophilus somnus).